Here is a 47-residue protein sequence, read N- to C-terminus: Defensin-like protein 1 (47 aa).

Intrachain disulfides connect C5/C47, C16/C36, C22/C43, and C26/C45.

Belongs to the DEFL family.

In terms of biological role, fabatins have antibacterial activity against Gram-positive and Gram-negative bacteria. High activity against P.aeruginosa. No activity against S.cerevisiae and C.albicans. In Vicia faba (Broad bean), this protein is Defensin-like protein 1.